The sequence spans 578 residues: MITHYSLPITRYPLPRFLTLSQIEFPSQFDVLVVGAGAAGLYTALCLPESLRVGLITKETVALSASDWAQGGIAAAIAPNDSPSLHIEDTIQAGAGLCDVAAVEFLAQQAPKCIESLVNLGVAFDRHGQALALTLEAAHSRNRVLHAADTTGREVTTTLTDQVLRRPNIQVIQQALALSLWLEPETGHCQGISLFYQGAITWVRAGAVVLATGGGGQVFAQTTNPAVSTGDGVAIAWRAGAILRDLEFVQFHPTALTKPGADRFLISEAVRGEGAHLVDNEGRRFAFDYHPAGELAPRDVVSRAIFSHLQRTAVDPATAHVWLDMRPIPEDKIRLRFPNIVKVCQRWGIDVFREPIPVAPAAHYWMGGIATNLKNQTNIPGLYAVGETASTGVHGANRLASNSLLECIVFGAQLANLTPADLIQHTETPALPTREFKIDASEWQHQQSQLAILREKLPRLVWQSAGICREQSTLSVAIATVKSWQQDFAALPLSQFLLSLQPNEPVSCNFSDTDQQLRLWAETGNLLDVAYLILKSAAFRIESRGGHFRLDYPHSNPDWQVHSLVQKHQWWQSPIMKS.

FAD contacts are provided by residues 36 to 39 (AGAA), Lys58, 65 to 72 (ASDWAQGG), and Asp231. The Proton donor/acceptor role is filled by Arg298. Residues Glu387 and 403 to 404 (SL) contribute to the FAD site.

This sequence belongs to the FAD-dependent oxidoreductase 2 family. NadB subfamily. FAD serves as cofactor.

It is found in the cytoplasm. The enzyme catalyses L-aspartate + O2 = iminosuccinate + H2O2. The protein operates within cofactor biosynthesis; NAD(+) biosynthesis; iminoaspartate from L-aspartate (oxidase route): step 1/1. Catalyzes the oxidation of L-aspartate to iminoaspartate, the first step in the de novo biosynthesis of NAD(+). The chain is L-aspartate oxidase (nadB) from Nostoc sp. (strain PCC 7120 / SAG 25.82 / UTEX 2576).